The following is a 120-amino-acid chain: Ribosome-binding factor A (120 aa).

Belongs to the RbfA family. As to quaternary structure, monomer. Binds 30S ribosomal subunits, but not 50S ribosomal subunits or 70S ribosomes.

The protein resides in the cytoplasm. Its function is as follows. One of several proteins that assist in the late maturation steps of the functional core of the 30S ribosomal subunit. Associates with free 30S ribosomal subunits (but not with 30S subunits that are part of 70S ribosomes or polysomes). Required for efficient processing of 16S rRNA. May interact with the 5'-terminal helix region of 16S rRNA. This chain is Ribosome-binding factor A, found in Rickettsia rickettsii (strain Iowa).